Reading from the N-terminus, the 379-residue chain is Sensor histidine kinase YhcY (379 aa).

One can recognise a Histidine kinase domain in the interval 185–373; that stretch reads RLAQELHDSV…KLSIRLPLKS (189 aa). H191 carries the post-translational modification Phosphohistidine; by autocatalysis.

It catalyses the reaction ATP + protein L-histidine = ADP + protein N-phospho-L-histidine.. Member of the two-component regulatory system YhcY/YhcZ. Probably activates YhcZ by phosphorylation. The polypeptide is Sensor histidine kinase YhcY (yhcY) (Bacillus subtilis (strain 168)).